Reading from the N-terminus, the 1165-residue chain is TBC1 domain family member 1 (1165 aa).

The residue at position 146 (Ser-146) is a Phosphoserine. A disordered region spans residues 207 to 234 (FSSDQSRSALQPPGDGERGPRPMRKSFS). Ser-232 carries the phosphoserine; by PKB/AKT1 modification. A Phosphoserine; by AMPK modification is found at Ser-234. Residues 243–401 (FRKEFQDAGL…LHKLCERIEG (159 aa)) form the PID domain. Position 500 is a phosphoserine (Ser-500). Phosphothreonine; by PKB/AKT1 is present on Thr-502. Phosphoserine occurs at positions 504, 522, 524, 562, 563, 567, 568, and 582. The residue at position 593 (Thr-593) is a Phosphothreonine. Ser-611 bears the Phosphoserine mark. At Ser-624 the chain carries Phosphoserine; by PKB/AKT1. The segment at 624–651 (SVSTETPHERKDFESKADHISDASRTPV) is disordered. The segment covering 629–645 (TPHERKDFESKADHISD) has biased composition (basic and acidic residues). Phosphoserine is present on residues Ser-692 and Ser-938. Residues 797-991 (GVPRHHRGEI…RVFDMIFLQG (195 aa)) enclose the Rab-GAP TBC domain. Phosphotyrosine is present on Tyr-949. The tract at residues 1146–1165 (QTAELGSQESDPTLPKPSGD) is disordered.

Interacts with APPL2 (via BAR domain); interaction is dependent of TBC1D1 phosphorylation at Ser-232; interaction diminishes the phosphorylation of TBC1D1 at Thr-593, resulting in inhibition of SLC2A4/GLUT4 translocation and glucose uptake. Post-translationally, insulin-stimulated phosphorylation by AKT family kinases stimulates SLC2A4/GLUT4 translocation.

The protein resides in the nucleus. In terms of biological role, may act as a GTPase-activating protein for Rab family protein(s). May play a role in the cell cycle and differentiation of various tissues. Involved in the trafficking and translocation of GLUT4-containing vesicles and insulin-stimulated glucose uptake into cells. The sequence is that of TBC1 domain family member 1 (TBC1D1) from Bos taurus (Bovine).